Here is a 605-residue protein sequence, read N- to C-terminus: Pescadillo homolog (605 aa).

The sufficient for interaction with ERB1 stretch occupies residues 51 to 484 (KANKGSTAPT…GEEEESESES (434 aa)). Position 288 is a phosphoserine (serine 288). The stretch at 294–342 (LKSALNADEANTDETEKEEEQEKKQEKEQEKEQNEETELDTFEDNNKNK) forms a coiled coil. The segment at 297 to 342 (ALNADEANTDETEKEEEQEKKQEKEQEKEQNEETELDTFEDNNKNK) is disordered. The segment covering 303–312 (ANTDETEKEE) has biased composition (acidic residues). A Phosphothreonine modification is found at threonine 308. A compositionally biased stretch (basic and acidic residues) spans 313 to 327 (EQEKKQEKEQEKEQN). The 95-residue stretch at 355 to 449 (PVASLFSAFV…ELVPANKYLP (95 aa)) folds into the BRCT domain. The tract at residues 459-605 (PWGDAIGYDP…AKLNKLDSKK (147 aa)) is disordered. The span at 473-510 (EEGEEEESESESESEDQVEEEDQEVVAGEEDDDDDEEL) shows a compositional bias: acidic residues. Residues 530-605 (EADKDVNKSK…AKLNKLDSKK (76 aa)) are a coiled coil. Over residues 562 to 571 (KQKKLYKKMK) the composition is skewed to basic residues. Over residues 575-584 (AKKEEQAENL) the composition is skewed to basic and acidic residues. Residues 585–598 (KKKKKQIAKQKAKL) are compositionally biased toward basic residues.

It belongs to the pescadillo family. As to quaternary structure, component of the NOP7 complex, composed of ERB1, NOP7 and YTM1. The complex is held together by ERB1, which interacts with NOP7 via its N-terminal domain and with YTM1 via a high-affinity interaction between the seven-bladed beta-propeller domains of the 2 proteins. The NOP7 complex associates with the 66S pre-ribosome.

It is found in the nucleus. The protein localises to the nucleolus. Its subcellular location is the nucleoplasm. Component of the NOP7 complex, which is required for maturation of the 25S and 5.8S ribosomal RNAs and formation of the 60S ribosome. This is Pescadillo homolog from Saccharomyces cerevisiae (strain YJM789) (Baker's yeast).